Reading from the N-terminus, the 651-residue chain is Beta-mannosyltransferase 7 (651 aa).

At 1-19 (MKLEMSSYLHKVPNTGITN) the chain is on the cytoplasmic side. The helical transmembrane segment at 20–42 (LSNSKSIVFIMFCATLLFIITSS) threads the bilayer. The Extracellular portion of the chain corresponds to 43 to 651 (RYLTGSESLG…VKIDEKSEET (609 aa)). 2 N-linked (GlcNAc...) asparagine glycosylation sites follow: N271 and N423.

Belongs to the BMT family.

The protein localises to the membrane. In terms of biological role, beta-mannosyltransferase involved in cell wall biosynthesis through beta-1,2-mannosylation of cell wall phosphopeptidomannan. This chain is Beta-mannosyltransferase 7 (BMT7), found in Candida albicans (strain SC5314 / ATCC MYA-2876) (Yeast).